The primary structure comprises 379 residues: Chaperone protein DnaJ (379 aa).

The J domain occupies 5–69 (EYYERLGVDK…QKRAAYDQYG (65 aa)). A CR-type zinc finger spans residues 141-223 (GVEKQVKYNR…CHGSGHEKVA (83 aa)). Positions 154, 157, 171, 174, 197, 200, 211, and 214 each coordinate Zn(2+). CXXCXGXG motif repeat units lie at residues 154-161 (CHTCDGSG), 171-178 (CHKCGGRG), 197-204 (CDVCHGTG), and 211-218 (CTTCHGSG).

Belongs to the DnaJ family. In terms of assembly, homodimer. Zn(2+) serves as cofactor.

The protein localises to the cytoplasm. Its function is as follows. Participates actively in the response to hyperosmotic and heat shock by preventing the aggregation of stress-denatured proteins and by disaggregating proteins, also in an autonomous, DnaK-independent fashion. Unfolded proteins bind initially to DnaJ; upon interaction with the DnaJ-bound protein, DnaK hydrolyzes its bound ATP, resulting in the formation of a stable complex. GrpE releases ADP from DnaK; ATP binding to DnaK triggers the release of the substrate protein, thus completing the reaction cycle. Several rounds of ATP-dependent interactions between DnaJ, DnaK and GrpE are required for fully efficient folding. Also involved, together with DnaK and GrpE, in the DNA replication of plasmids through activation of initiation proteins. In Lactococcus lactis subsp. cremoris (strain SK11), this protein is Chaperone protein DnaJ.